The sequence spans 369 residues: Peptide chain release factor subunit 1 (369 aa).

Belongs to the eukaryotic release factor 1 family. In terms of assembly, heterodimer of two subunits, one of which binds GTP.

It localises to the cytoplasm. In terms of biological role, directs the termination of nascent peptide synthesis (translation) in response to the termination codons UAA, UAG and UGA. In Saccharolobus solfataricus (strain ATCC 35092 / DSM 1617 / JCM 11322 / P2) (Sulfolobus solfataricus), this protein is Peptide chain release factor subunit 1 (prf1).